Here is a 318-residue protein sequence, read N- to C-terminus: Putative 2-hydroxyacid dehydrogenase SH0752 (318 aa).

Residues 155–156 (EI), 234–236 (AGR), and Asp-260 each bind NAD(+). Arg-236 is a catalytic residue. Residue Glu-265 is part of the active site. The active-site Proton donor is the His-283. 283–286 (HIGN) contacts NAD(+).

The protein belongs to the D-isomer specific 2-hydroxyacid dehydrogenase family.

The chain is Putative 2-hydroxyacid dehydrogenase SH0752 from Staphylococcus haemolyticus (strain JCSC1435).